Here is a 202-residue protein sequence, read N- to C-terminus: ATP-dependent Clp protease proteolytic subunit 3 (202 aa).

Catalysis depends on Ser93, which acts as the Nucleophile. His118 is a catalytic residue.

The protein belongs to the peptidase S14 family. In terms of assembly, fourteen ClpP subunits assemble into 2 heptameric rings which stack back to back to give a disk-like structure with a central cavity, resembling the structure of eukaryotic proteasomes.

It localises to the cytoplasm. The enzyme catalyses Hydrolysis of proteins to small peptides in the presence of ATP and magnesium. alpha-casein is the usual test substrate. In the absence of ATP, only oligopeptides shorter than five residues are hydrolyzed (such as succinyl-Leu-Tyr-|-NHMec, and Leu-Tyr-Leu-|-Tyr-Trp, in which cleavage of the -Tyr-|-Leu- and -Tyr-|-Trp bonds also occurs).. In terms of biological role, cleaves peptides in various proteins in a process that requires ATP hydrolysis. Has a chymotrypsin-like activity. Plays a major role in the degradation of misfolded proteins. This Rhodococcus jostii (strain RHA1) protein is ATP-dependent Clp protease proteolytic subunit 3.